Consider the following 181-residue polypeptide: RING-H2 finger protein ATL72 (181 aa).

Residues 34-54 form a helical membrane-spanning segment; the sequence is VIILAALLCALICALSLNSAL. The RING-type; atypical zinc finger occupies 114–156; the sequence is CLICLGDFEDGEKVRVLPKCNHGFHVRCIDTWLLSRSSCPTCR.

The protein belongs to the RING-type zinc finger family. ATL subfamily.

It localises to the membrane. It carries out the reaction S-ubiquitinyl-[E2 ubiquitin-conjugating enzyme]-L-cysteine + [acceptor protein]-L-lysine = [E2 ubiquitin-conjugating enzyme]-L-cysteine + N(6)-ubiquitinyl-[acceptor protein]-L-lysine.. It functions in the pathway protein modification; protein ubiquitination. This chain is RING-H2 finger protein ATL72 (ATL72), found in Arabidopsis thaliana (Mouse-ear cress).